The primary structure comprises 188 residues: Surfactant protein C (188 aa).

The propeptide occupies 1–23 (MDMGSKEALMESPPDYSAAPRGR). S-palmitoyl cysteine attachment occurs at residues C28 and C29. A propeptide spanning residues 59–188 (HMSQKHTEMV…LCGEVPLIYI (130 aa)) is cleaved from the precursor. The region spanning 94–188 (FPIGSTGIVT…LCGEVPLIYI (95 aa)) is the BRICHOS domain. Cysteines 121 and 180 form a disulfide. The interval 144-164 (NPAEPPTQRGQDKGPAAGPAS) is disordered.

It localises to the secreted. Its subcellular location is the extracellular space. It is found in the surface film. Functionally, pulmonary surfactant associated proteins promote alveolar stability by lowering the surface tension at the air-liquid interface in the peripheral air spaces. This is Surfactant protein C (SFTPC) from Oryctolagus cuniculus (Rabbit).